Reading from the N-terminus, the 563-residue chain is Arginine--tRNA ligase (563 aa).

Positions 123–133 (PNIAKDMHVGH) match the 'HIGH' region motif.

It belongs to the class-I aminoacyl-tRNA synthetase family. As to quaternary structure, monomer.

Its subcellular location is the cytoplasm. The catalysed reaction is tRNA(Arg) + L-arginine + ATP = L-arginyl-tRNA(Arg) + AMP + diphosphate. The polypeptide is Arginine--tRNA ligase (Chlamydia trachomatis serovar A (strain ATCC VR-571B / DSM 19440 / HAR-13)).